The sequence spans 989 residues: Translation initiation factor IF-2 (989 aa).

Disordered regions lie at residues 43–219 (KRRR…LQAR) and 234–379 (EARR…GGAR). Residues 72 to 87 (NTPNKDTAVTQTATKN) are compositionally biased toward polar residues. The span at 105–146 (PKPVAAEATAQETSKAAPAAAQPVAEKEAAAPASAEAAKSAA) shows a compositional bias: low complexity. The segment covering 149 to 159 (VTDRGAKKTTE) has biased composition (basic and acidic residues). Residues 160-171 (KNGANASGNRPS) are compositionally biased toward polar residues. Residues 234 to 293 (EARRREDRLKQEADLEEQRRIEEKRRLEAEAKVEAEKQAALKEKEKAEAKARAKAEKEAK) are compositionally biased toward basic and acidic residues. Residues 294 to 303 (AAQAKTAGAA) show a composition bias toward low complexity. A compositionally biased stretch (basic and acidic residues) spans 342–361 (PRREAPRPAMRDRKGEDRRQ). Positions 489-659 (SRPPVVTIMG…LLQAEMLELK (171 aa)) constitute a tr-type G domain. The tract at residues 498 to 505 (GHVDHGKT) is G1. Position 498–505 (498–505 (GHVDHGKT)) interacts with GTP. The interval 523-527 (GITQH) is G2. The interval 545 to 548 (DTPG) is G3. Residues 545–549 (DTPGH) and 599–602 (NKMD) each bind GTP. Residues 599–602 (NKMD) form a G4 region. The G5 stretch occupies residues 635-637 (SAA).

This sequence belongs to the TRAFAC class translation factor GTPase superfamily. Classic translation factor GTPase family. IF-2 subfamily.

The protein localises to the cytoplasm. Functionally, one of the essential components for the initiation of protein synthesis. Protects formylmethionyl-tRNA from spontaneous hydrolysis and promotes its binding to the 30S ribosomal subunits. Also involved in the hydrolysis of GTP during the formation of the 70S ribosomal complex. The protein is Translation initiation factor IF-2 of Zymomonas mobilis subsp. mobilis (strain ATCC 31821 / ZM4 / CP4).